The following is a 260-amino-acid chain: PHD finger protein ALFIN-LIKE 5 (260 aa).

At methionine 1 the chain carries N-acetylmethionine. The tract at residues 142 to 203 (AEKQTKEMPS…EEDEDEDEHG (62 aa)) is disordered. Over residues 148-165 (EMPSSANQNGNRSKSNSK) the composition is skewed to polar residues. Positions 167–181 (RGLESKSSKTIHAKD) are enriched in basic and acidic residues. Positions 182 to 202 (EEEGLELEEGEEEEDEDEDEH) are enriched in acidic residues. The PHD-type zinc finger occupies 204–256 (ETLCGACGDNYASDEFWICCDMCEKWFHGECVKITPARAEHIKHYKCPTCSNK).

This sequence belongs to the Alfin family. In terms of assembly, interacts with H3K4me3 and to a lesser extent with H3K4me2. As to expression, ubiquitously expressed.

Its subcellular location is the nucleus. Its function is as follows. Histone-binding component that specifically recognizes H3 tails trimethylated on 'Lys-4' (H3K4me3), which mark transcription start sites of virtually all active genes. The protein is PHD finger protein ALFIN-LIKE 5 (AL5) of Arabidopsis thaliana (Mouse-ear cress).